A 264-amino-acid chain; its full sequence is Glutamate racemase (264 aa).

Substrate is bound by residues D10–S11 and Y42–G43. The active-site Proton donor/acceptor is C73. A substrate-binding site is contributed by N74–T75. The active-site Proton donor/acceptor is C183. A substrate-binding site is contributed by T184–H185.

This sequence belongs to the aspartate/glutamate racemases family.

The catalysed reaction is L-glutamate = D-glutamate. It functions in the pathway cell wall biogenesis; peptidoglycan biosynthesis. Provides the (R)-glutamate required for cell wall biosynthesis. This is Glutamate racemase from Streptococcus pneumoniae (strain ATCC BAA-255 / R6).